The following is a 277-amino-acid chain: Large ribosomal subunit protein uL2c (277 aa).

Residues 223-277 form a disordered region; it reads VVMNPIDHPHGGGEGRAPIGRKKPLTPWGHPALGKRSRKNNKYSDTLILRRRKNS.

This sequence belongs to the universal ribosomal protein uL2 family. In terms of assembly, part of the 50S ribosomal subunit.

Its subcellular location is the plastid. The protein resides in the chloroplast. The chain is Large ribosomal subunit protein uL2c (rpl2) from Marchantia polymorpha (Common liverwort).